The sequence spans 374 residues: Deoxyguanosinetriphosphate triphosphohydrolase-like protein (374 aa).

An HD domain is found at 65–196 (RLTHSLEVAQ…ANLADEIAYN (132 aa)).

Belongs to the dGTPase family. Type 2 subfamily.

The chain is Deoxyguanosinetriphosphate triphosphohydrolase-like protein (dgt) from Nitrosomonas europaea (strain ATCC 19718 / CIP 103999 / KCTC 2705 / NBRC 14298).